A 285-amino-acid polypeptide reads, in one-letter code: Sulfotransferase 2A2 (285 aa).

6 residues coordinate 3'-phosphoadenylyl sulfate: K44, S45, G46, T47, N48, and W49. The active-site Proton acceptor is H99. 3'-phosphoadenylyl sulfate-binding residues include R121, S129, Y184, S218, R247, K248, and G249.

The protein belongs to the sulfotransferase 1 family. As to expression, detected in liver.

Its subcellular location is the cytoplasm. The catalysed reaction is an alcohol + 3'-phosphoadenylyl sulfate = an alkyl sulfate + adenosine 3',5'-bisphosphate + H(+). Sulfotransferase that utilizes 3'-phospho-5'-adenylyl sulfate (PAPS) as sulfonate donor to catalyze the sulfate conjugation of a potential wide variety of acceptor molecules bearing a hydroxyl group. Sulfonation increases the water solubility of most compounds, and therefore their renal excretion, but it can also result in bioactivation to form active metabolites. This is Sulfotransferase 2A2 from Rattus norvegicus (Rat).